Here is a 175-residue protein sequence, read N- to C-terminus: Ribosome maturation factor RimM (175 aa).

A PRC barrel domain is found at A99–L172.

It belongs to the RimM family. As to quaternary structure, binds ribosomal protein uS19.

Its subcellular location is the cytoplasm. An accessory protein needed during the final step in the assembly of 30S ribosomal subunit, possibly for assembly of the head region. Essential for efficient processing of 16S rRNA. May be needed both before and after RbfA during the maturation of 16S rRNA. It has affinity for free ribosomal 30S subunits but not for 70S ribosomes. The protein is Ribosome maturation factor RimM of Picosynechococcus sp. (strain ATCC 27264 / PCC 7002 / PR-6) (Agmenellum quadruplicatum).